Here is a 570-residue protein sequence, read N- to C-terminus: Glutamate--tRNA ligase, chloroplastic/mitochondrial (570 aa).

Residues 1–39 (MASLVYGTPWLRVRSLPELAPAFLRRRQSSLFYCSRRSF) constitute a chloroplast and mitochondrion transit peptide. 57–59 (RFA) contacts L-glutamate. The 'HIGH' region signature appears at 60–70 (PSPTGNLHVGG). His-67 serves as a coordination point for ATP. L-glutamate is bound by residues Glu-93, 245–249 (YNFCV), and Arg-263. ATP-binding positions include Glu-266 and 301 to 305 (KLSKR). The 'KMSKS' region signature appears at 301–305 (KLSKR).

It belongs to the class-I aminoacyl-tRNA synthetase family. Glutamate--tRNA ligase type 1 subfamily.

The protein localises to the plastid. It localises to the chloroplast. The protein resides in the mitochondrion. The catalysed reaction is tRNA(Glu) + L-glutamate + ATP = L-glutamyl-tRNA(Glu) + AMP + diphosphate. In terms of biological role, catalyzes the attachment of glutamate to tRNA(Glu) in a two-step reaction: glutamate is first activated by ATP to form Glu-AMP and then transferred to the acceptor end of tRNA(Glu). In Arabidopsis thaliana (Mouse-ear cress), this protein is Glutamate--tRNA ligase, chloroplastic/mitochondrial.